Here is an 84-residue protein sequence, read N- to C-terminus: Protein SlyX homolog (84 aa).

This sequence belongs to the SlyX family.

The sequence is that of Protein SlyX homolog from Mannheimia succiniciproducens (strain KCTC 0769BP / MBEL55E).